Consider the following 330-residue polypeptide: Phenylalanine--tRNA ligase alpha subunit (330 aa).

Glutamate 257 lines the Mg(2+) pocket.

The protein belongs to the class-II aminoacyl-tRNA synthetase family. Phe-tRNA synthetase alpha subunit type 1 subfamily. Tetramer of two alpha and two beta subunits. The cofactor is Mg(2+).

The protein resides in the cytoplasm. The enzyme catalyses tRNA(Phe) + L-phenylalanine + ATP = L-phenylalanyl-tRNA(Phe) + AMP + diphosphate + H(+). The chain is Phenylalanine--tRNA ligase alpha subunit from Nostoc punctiforme (strain ATCC 29133 / PCC 73102).